We begin with the raw amino-acid sequence, 195 residues long: Imidazoleglycerol-phosphate dehydratase (195 aa).

Belongs to the imidazoleglycerol-phosphate dehydratase family.

The protein localises to the cytoplasm. It carries out the reaction D-erythro-1-(imidazol-4-yl)glycerol 3-phosphate = 3-(imidazol-4-yl)-2-oxopropyl phosphate + H2O. It participates in amino-acid biosynthesis; L-histidine biosynthesis; L-histidine from 5-phospho-alpha-D-ribose 1-diphosphate: step 6/9. The protein is Imidazoleglycerol-phosphate dehydratase of Parafrankia sp. (strain EAN1pec).